Here is a 157-residue protein sequence, read N- to C-terminus: NADPH-dependent 7-cyano-7-deazaguanine reductase (157 aa).

Catalysis depends on C55, which acts as the Thioimide intermediate. The active-site Proton donor is the D62. Substrate contacts are provided by residues V77–S79 and H96–E97.

The protein belongs to the GTP cyclohydrolase I family. QueF type 1 subfamily.

It localises to the cytoplasm. The enzyme catalyses 7-aminomethyl-7-carbaguanine + 2 NADP(+) = 7-cyano-7-deazaguanine + 2 NADPH + 3 H(+). Its pathway is tRNA modification; tRNA-queuosine biosynthesis. Catalyzes the NADPH-dependent reduction of 7-cyano-7-deazaguanine (preQ0) to 7-aminomethyl-7-deazaguanine (preQ1). This is NADPH-dependent 7-cyano-7-deazaguanine reductase from Neisseria meningitidis serogroup C / serotype 2a (strain ATCC 700532 / DSM 15464 / FAM18).